The chain runs to 2035 residues: Envoplakin (2035 aa).

Over residues 1–27 (MFKGLSKGSQGKGSPKGSPAKGSPKGS) the composition is skewed to low complexity. Disordered stretches follow at residues 1-37 (MFKGLSKGSQGKGSPKGSPAKGSPKGSPNKHNRAATQ) and 63-84 (KLQQDRQNGEQNQALQHQQETG). Residues 1 to 841 (MFKGLSKGSQ…LEPALAVSAP (841 aa)) form a globular 1 region. Residues 12 to 28 (KGSPKGSPAKGSPKGSP) are 4 X 4 AA tandem repeats of K-G-S-P. Positions 71–84 (GEQNQALQHQQETG) are enriched in polar residues. One copy of the Spectrin repeat lies at 229–330 (YTHLQGCTKQ…LCICQESQLQ (102 aa)). The disordered stretch occupies residues 400–419 (QEVAPLPQRRNPSKQPLHVD). The 58-residue stretch at 413-470 (KQPLHVDSICDWDSGEVQLLRGERYTLKDNADPYTWLVQGPGGETKSAPAACLCIPAP) folds into the SH3 domain. Residues 842 to 1664 (KRLRVISLQE…EKERTLRDLH (823 aa)) adopt a coiled-coil conformation. The central fibrous rod domain stretch occupies residues 842-1674 (KRLRVISLQE…TKVSREELNQ (833 aa)). A Plectin 1 repeat occupies 1186–1227 (KQKPKVQLQERVSEIFQVLPETEQEIRRLRAQLQETGSKKSG). Ser1576 carries the post-translational modification Phosphoserine. Residues 1607–1631 (KQQKARQLQEEGRLLSQKTESERQK) are compositionally biased toward basic and acidic residues. Positions 1607–1637 (KQQKARQLQEEGRLLSQKTESERQKAAQRSQ) are disordered. A globular 2 region spans residues 1675–2035 (ETQTRETNLS…SPTLPRSCVR (361 aa)). The stretch at 1679-1714 (RETNLSTKICILEPETGNDMSPYEAYKRGVIDRGQY) is one Plectin 2 repeat. Ser1800 bears the Phosphoserine mark. Plectin repeat units lie at residues 1819–1856 (FGLTEDSFPIAGIYDTTTDNKCSIKAAVAKNMLDPITG), 1857–1894 (QKLLEAQAATGGIVDLLSRERYSVHKAVERGLIENTST), 1895–1932 (QRLLNAQKAFTGIEDPVTRKRLSVGEAIQKGWMPQESV), 1933–1970 (LPHLLVQHLTGGLIDPKRTGRIPVPQAVLCGMISEDLG), and 1971–2008 (QLLQDESGYEKDLTDPITKERLSYKEAMGRCRKDPLSG). A Phosphoserine modification is found at Ser2026.

Belongs to the plakin or cytolinker family. As to quaternary structure, may form a homodimer or a heterodimer with PPL.

It localises to the cell junction. The protein resides in the desmosome. The protein localises to the cornified envelope. It is found in the cytoplasm. Its subcellular location is the cytoskeleton. In terms of biological role, component of the cornified envelope of keratinocytes. May link the cornified envelope to desmosomes and intermediate filaments. This Mus musculus (Mouse) protein is Envoplakin (Evpl).